The sequence spans 158 residues: SsrA-binding protein (158 aa).

The protein belongs to the SmpB family.

It localises to the cytoplasm. Required for rescue of stalled ribosomes mediated by trans-translation. Binds to transfer-messenger RNA (tmRNA), required for stable association of tmRNA with ribosomes. tmRNA and SmpB together mimic tRNA shape, replacing the anticodon stem-loop with SmpB. tmRNA is encoded by the ssrA gene; the 2 termini fold to resemble tRNA(Ala) and it encodes a 'tag peptide', a short internal open reading frame. During trans-translation Ala-aminoacylated tmRNA acts like a tRNA, entering the A-site of stalled ribosomes, displacing the stalled mRNA. The ribosome then switches to translate the ORF on the tmRNA; the nascent peptide is terminated with the 'tag peptide' encoded by the tmRNA and targeted for degradation. The ribosome is freed to recommence translation, which seems to be the essential function of trans-translation. In Chloroflexus aggregans (strain MD-66 / DSM 9485), this protein is SsrA-binding protein.